The following is a 209-amino-acid chain: Protein GrpE (209 aa).

Residues 1 to 18 show a composition bias toward basic and acidic residues; sequence MKIFNKDGNKNSKEDTKA. The segment at 1 to 60 is disordered; sequence MKIFNKDGNKNSKEDTKAGAENSEAQNSGSSAEEVNKARENPEEASASSEAEKSPEVKCQ. Residues 23-33 show a composition bias toward polar residues; sequence SEAQNSGSSAE. Residues 50–60 show a composition bias toward basic and acidic residues; the sequence is EAEKSPEVKCQ.

The protein belongs to the GrpE family. As to quaternary structure, homodimer.

It is found in the cytoplasm. Its function is as follows. Participates actively in the response to hyperosmotic and heat shock by preventing the aggregation of stress-denatured proteins, in association with DnaK and GrpE. It is the nucleotide exchange factor for DnaK and may function as a thermosensor. Unfolded proteins bind initially to DnaJ; upon interaction with the DnaJ-bound protein, DnaK hydrolyzes its bound ATP, resulting in the formation of a stable complex. GrpE releases ADP from DnaK; ATP binding to DnaK triggers the release of the substrate protein, thus completing the reaction cycle. Several rounds of ATP-dependent interactions between DnaJ, DnaK and GrpE are required for fully efficient folding. This chain is Protein GrpE, found in Methanosarcina barkeri (strain Fusaro / DSM 804).